Consider the following 338-residue polypeptide: Galactinol synthase 2 (338 aa).

Lysine 105 is an active-site residue. Mn(2+) contacts are provided by aspartate 121, aspartate 123, and histidine 258.

Belongs to the glycosyltransferase 8 family. Galactosyltransferase subfamily. Requires a divalent metal cation as cofactor.

It localises to the cytoplasm. It catalyses the reaction myo-inositol + UDP-alpha-D-galactose = alpha-D-galactosyl-(1-&gt;3)-1D-myo-inositol + UDP + H(+). Galactinol synthase involved in the biosynthesis of raffinose family oligosaccharides (RFOs) that function as osmoprotectants. May promote plant stress tolerance. In Solanum lycopersicum (Tomato), this protein is Galactinol synthase 2 (GOLS2).